Consider the following 150-residue polypeptide: UPF0039 protein C11D3.02c (150 aa).

Positions 9–150 (KYFNSLDVKE…IPHVEMRLEL (142 aa)) constitute an N-acetyltransferase domain.

The protein belongs to the UPF0039 (ElaA) family.

This chain is UPF0039 protein C11D3.02c, found in Schizosaccharomyces pombe (strain 972 / ATCC 24843) (Fission yeast).